A 191-amino-acid polypeptide reads, in one-letter code: Probable molybdenum cofactor guanylyltransferase (191 aa).

GTP contacts are provided by residues 6–8 (LAG), Lys18, Asp67, and Asp92. Asp92 lines the Mg(2+) pocket.

The protein belongs to the MobA family. Mg(2+) is required as a cofactor.

Its subcellular location is the cytoplasm. The catalysed reaction is Mo-molybdopterin + GTP + H(+) = Mo-molybdopterin guanine dinucleotide + diphosphate. Transfers a GMP moiety from GTP to Mo-molybdopterin (Mo-MPT) cofactor (Moco or molybdenum cofactor) to form Mo-molybdopterin guanine dinucleotide (Mo-MGD) cofactor. The protein is Probable molybdenum cofactor guanylyltransferase of Thermococcus gammatolerans (strain DSM 15229 / JCM 11827 / EJ3).